Reading from the N-terminus, the 512-residue chain is MGGTQNGKAVANGKAKNGNITEKVIKLDPCPKPAFYVFWLVQLNITMMLVGAMVATLFDKWGIVKTKRSKGDPRMESFQPLGNSFDATYTDHIYRQSTDVVNRPISGVPGAIVRLKDRYTDDHGWTQKYTGTESEVINLGSYNYLGFSHRSGVCAEAAAAHIDKYGINCGGSRQEIGNHVAHKSVESTIAQYLNVEDAIVFPMGFATNSMNIPSLVDKGSLILSDRLNHASLVTGCRLSGAHTVVFRHNDASDCERKLRDALCGVSPKTGEKYNKVLIIIEGIYSMEGTIVNLPAFIAVKKKYNCYLFLDEAHSIGAVGPSGRGVAEYWGCNPRDIDIMMGTLTKSFASAGGYMGGSKKVIDHIRRYSAGTCYGVTMSPPLIAQVERAVLIMSGKDGTDIGRQKAIQLLENSRYFRKELRKRGFLVYGNNDSPVVPLMTFYITKVVEFSRRMLKHNIGIVAVGYPATPLLEARVRFCLSADHTKEHLDYILEAVEQVGMETGTFYGTKIVDE.

Residue K345 is modified to N6-(pyridoxal phosphate)lysine.

It belongs to the class-II pyridoxal-phosphate-dependent aminotransferase family. In terms of assembly, heterodimer of sptl-1/sptl-3. Pyridoxal 5'-phosphate is required as a cofactor.

It carries out the reaction L-serine + hexadecanoyl-CoA + H(+) = 3-oxosphinganine + CO2 + CoA. It participates in lipid metabolism; sphingolipid metabolism. Its function is as follows. Component of the serine palmitoyltransferase (SPT) that catalyzes the first committed step in sphingolipid biosynthesis, which is the condensation of an acyl-CoA species and L-serine. The catalytic core is composed of a heterodimer of sptl-1 and sptl-2 or sptl-1 and sptl-3. Required for the specification of abicobasal polarity and development of the gut lumen. The sequence is that of Serine palmitoyltransferase 3 (sptl-3) from Caenorhabditis elegans.